The chain runs to 1684 residues: MEGLLAGGLAAPDHPRGPAPREDIESGAEAAEGEGDIFPSSHYLPITKEGPRDILDGRSGISDGQPHPGLSEALPRATSATHRISSCYWDGDSLDFQPGSPPPHLLGPFPASLDVQGSWEHPMVQEAREGTPSEQRFKDSVIVRTMKPYAKLKGSRKFLHHQGEVKFLEKYSPSHHKFDWLQDTDEQGPLKDTGLHLDLPAQPPTVTSFRRVIVPVDNTPKTLDMEVMGTREDLEDFGQVAQPSEWGLHTSASEVATQTWTVNSEASVERLQPLLSPVQTGPYLCELLQEVAGGVDSNEEEEEEPAVFPCIECSIYFKHKEHLLEHMSQHRRAPGQEPPADLAPLACSECGWAFTEPTALEQHWQLHQASREKIIEEIQKLKQFPGDEGREARLQCSKCVFGTNSSRAFMQHAKLHVRGSLPSRQATEPFRGGSPVLDVSTLVYPSYGDSSGLNTCVHCGFTAPSKSLLREHTRLVHAHHAHWEEVGEAFEDLTSQPCTSQDAYTHSPDTATVDYFSKSEPLLASVWQENPSGYDPDLAFGPDYQQPGMRNFPLLNSGQQSLGKLAFPSPMASASYSIQRNRNKSTVHLQRMEDKSHLWSEEEEEEDEDVVLTSERDFTPENGAFPPLAIPSLIPQPALELKQTFQDALQAVDASETQQQQLQGMVPIVLMAKLRPQVIAATTRASPQLPPEEPELRSTHPLDFLLLDAPLGGSLGLNTLLEGDPAMALKHEERKCPYCPDRFHYGIGLANHVRGHLNRVGVSYNVRHFISAEEVKAIERRFSFQKKKKKVANFDPGTFSLMRCDFCGAGFDTRAGLSSHARAHLRDFGITNWELTISPINILQELLATSAAELPPSPLGREPGGPPRSFLTSRRPRLPLTMPFPPTWAEDPGPIYGDAQSLTTCEVCGACFETRKGLSSHARSHLRQLGVAESESSGAPIDLLYELVKQKGLPDAPLGLTPSLTKKSNSPKEFLAGAARPGLLTLAKPMDAPAVNKAIKSPPGFSAKGLTHPSSSPLLKKAPLTLAGSPTPKNPEDKSPQLSLSPRPTSPKAQWPQSEDEGPLNLTSGPEPTRDIRCEFCGEFFENRKGLSSHARSHLRQMGVTEWYVNGSPIDTLREILKRRTQSRPGGHLHPPGPSPKALAKVLSTGGPGSSLEARSPSDLHISPLTKKLPPPPGSPLGHSPTASPPPTARKMFSGLATPSLPKKLKPEHMRVEIKREMLPGTLHGEPHPSEGPWGTPREDMAPLNLSARAEPVRDIRCEFCGEFFENRKGLSSHARSHLRQMGVTEWSVNGSPIDTLREILKKKSKLCLIKKEPPAGDLAPALTEDGSPTAAPGALHSPLPLSPLASRPGKPGAGPTQVPRELSLSPITGSKPSAASYLGPVATKRPLQEDRFLPAEVKAKTYIQTELPFKAKTLHEKTSHSSTEACCELCGLYFENRKALASHARAHLRQFGVTEWCVNGSPIETLSEWIKHRPQKVGAYRSYIQGGRPFTKKFRSAGHGRDSDKRPPLGLAPGGLSLVGRSAGGEPGLEAGRAADSGERPLATSPPGTVKSEEHQRQNINKFERRQARPSDASAARGGEEVNDLQQKLEEVRQPPPRVRPVPSLVPRPPQTSLVKFVGNIYTLKCRFCEVEFQGPLSIQEEWVRHLQRHILEMNFSKADPPPEEPQAPQAQTAAVEAP.

Positions 1–77 (MEGLLAGGLA…PGLSEALPRA (77 aa)) are disordered. Residues 13 to 24 (DHPRGPAPREDI) are compositionally biased toward basic and acidic residues. 5 consecutive C2H2-type zinc fingers follow at residues 308–330 (FPCI…MSQH), 345–367 (LACS…WQLH), 454–477 (NTCV…RLVH), 734–756 (RKCP…VRGH), and 802–824 (MRCD…ARAH). The tract at residues 854 to 876 (LPPSPLGREPGGPPRSFLTSRRP) is disordered. The segment at 903 to 925 (TTCEVCGACFETRKGLSSHARSH) adopts a C2H2-type 6 zinc-finger fold. Residues K916, K972, K988, K1000, and K1021 each participate in a glycyl lysine isopeptide (Lys-Gly) (interchain with G-Cter in SUMO2) cross-link. The tract at residues 1005 to 1072 (FSAKGLTHPS…PLNLTSGPEP (68 aa)) is disordered. The residue at position 1029 (S1029) is a Phosphoserine. T1031 carries the phosphothreonine modification. Residues K1033 and K1038 each participate in a glycyl lysine isopeptide (Lys-Gly) (interchain with G-Cter in SUMO2) cross-link. A phosphoserine mark is found at S1039 and S1045. Polar residues predominate over residues 1040 to 1057 (PQLSLSPRPTSPKAQWPQ). T1049 carries the phosphothreonine modification. Phosphoserine is present on residues S1050 and S1058. An interaction with CTBP1 and CTBP2 1 region spans residues 1063–1067 (PLNLT). The C2H2-type 7 zinc-finger motif lies at 1076–1098 (IRCEFCGEFFENRKGLSSHARSH). K1089 is covalently cross-linked (Glycyl lysine isopeptide (Lys-Gly) (interchain with G-Cter in SUMO2)). 2 positions are modified to phosphoserine: S1112 and S1139. Positions 1127–1208 (SRPGGHLHPP…GLATPSLPKK (82 aa)) are disordered. Glycyl lysine isopeptide (Lys-Gly) (interchain with G-Cter in SUMO2) cross-links involve residues K1141 and K1145. 3 positions are modified to phosphoserine: S1155, S1160, and S1167. Glycyl lysine isopeptide (Lys-Gly) (interchain with G-Cter in SUMO2) cross-links involve residues K1171 and K1172. Residues S1179 and S1184 each carry the phosphoserine modification. The residue at position 1195 (K1195) is an N6,N6,N6-trimethyllysine; by EHMT2; alternate. K1195 is modified (N6,N6-dimethyllysine; by EHMT2; alternate). Residue K1210 forms a Glycyl lysine isopeptide (Lys-Gly) (interchain with G-Cter in SUMO2) linkage. The tract at residues 1247–1251 (PLNLS) is interaction with CTBP1 and CTBP2 2. The C2H2-type 8 zinc finger occupies 1260–1282 (IRCEFCGEFFENRKGLSSHARSH). K1273 is covalently cross-linked (Glycyl lysine isopeptide (Lys-Gly) (interchain with G-Cter in SUMO2)). Residue S1296 is modified to Phosphoserine. Residue K1315 forms a Glycyl lysine isopeptide (Lys-Gly) (interchain with G-Cter in SUMO2) linkage. The interval 1320–1384 (AGDLAPALTE…SKPSAASYLG (65 aa)) is disordered. The span at 1335–1351 (AAPGALHSPLPLSPLAS) shows a compositional bias: low complexity. Residues S1342 and S1347 each carry the phosphoserine modification. Glycyl lysine isopeptide (Lys-Gly) (interchain with G-Cter in SUMO2) cross-links involve residues K1376, K1389, K1403, K1405, and K1415. The C2H2-type 9 zinc-finger motif lies at 1430–1452 (ACCELCGLYFENRKALASHARAH). Residues K1481, K1497, and K1510 each participate in a glycyl lysine isopeptide (Lys-Gly) (interchain with G-Cter in SUMO2) cross-link. Disordered regions lie at residues 1496–1587 (TKKF…GEEV) and 1592–1611 (QKLE…PSLV). Residue S1550 is modified to Phosphoserine. K1556 is covalently cross-linked (Glycyl lysine isopeptide (Lys-Gly) (interchain with G-Cter in SUMO1); alternate). Residue K1556 forms a Glycyl lysine isopeptide (Lys-Gly) (interchain with G-Cter in SUMO2); alternate linkage. Residues 1556 to 1574 (KSEEHQRQNINKFERRQAR) show a composition bias toward basic and acidic residues. Glycyl lysine isopeptide (Lys-Gly) (interchain with G-Cter in SUMO2) cross-links involve residues K1567 and K1593. Pro residues predominate over residues 1599 to 1611 (QPPPRVRPVPSLV). The C2H2-type 10 zinc finger occupies 1629 to 1655 (LKCRFCEVEFQGPLSIQEEWVRHLQRH). The disordered stretch occupies residues 1662-1684 (SKADPPPEEPQAPQAQTAAVEAP). K1663 is covalently cross-linked (Glycyl lysine isopeptide (Lys-Gly) (interchain with G-Cter in SUMO2)). Residues 1672–1684 (QAPQAQTAAVEAP) show a composition bias toward low complexity.

The protein belongs to the krueppel C2H2-type zinc-finger protein family. As to quaternary structure, part of a complex containing at least CDYL, REST, WIZ, SETB1, EHMT1 and EHMT2. Interacts with EHMT1, EHMT2, CTBP1 and CTBP2. As to expression, according to PubMed:9795207, isoform L and isoform S are brain-specific. According to PubMed:16702210, isoform S is ubiquitously expressed.

It is found in the nucleus. Its function is as follows. May link EHMT1 and EHMT2 histone methyltransferases to the CTBP corepressor machinery. May be involved in EHMT1-EHMT2 heterodimer formation and stabilization. This Mus musculus (Mouse) protein is Protein Wiz (Wiz).